A 224-amino-acid polypeptide reads, in one-letter code: RNA-binding protein 24-B (224 aa).

An RRM domain is found at 11 to 88 (TKIFVGGLPY…RKANVNLAYL (78 aa)).

The protein resides in the nucleus. It localises to the cytoplasm. Functionally, multifunctional RNA-binding protein involved in the regulation of pre-mRNA splicing, mRNA stability and mRNA translation important for cell fate decision and differentiation. Plays a major role in pre-mRNA alternative splicing regulation. Mediates preferentially muscle-specific exon inclusion in numerous mRNAs important for striated cardiac and skeletal muscle cell differentiation. Binds to intronic splicing enhancer (ISE) composed of stretches of GU-rich motifs localized in flanking intron of exon that will be included by alternative splicing. Involved in embryonic stem cell (ESC) transition to cardiac cell differentiation by promoting pre-mRNA alternative splicing events of several pluripotency and/or differentiation genes. Plays a role in the regulation of mRNA stability and mRNA translation to which it is bound. Involved in myogenic differentiation by regulating myog levels. Binds to a huge amount of mRNAs. Required for embryonic heart development, sarcomer and M-band formation in striated muscles. In Xenopus laevis (African clawed frog), this protein is RNA-binding protein 24-B (rbm24-b).